The chain runs to 261 residues: Hemin import ATP-binding protein HmuV (261 aa).

An ABC transporter domain is found at 5 to 241 (LTANAASFAI…DLLARVFDVD (237 aa)). 37-44 (GPNGAGKS) provides a ligand contact to ATP.

It belongs to the ABC transporter superfamily. Heme (hemin) importer (TC 3.A.1.14.5) family. The complex is composed of two ATP-binding proteins (HmuV), two transmembrane proteins (HmuU) and a solute-binding protein (HmuT).

The protein localises to the cell inner membrane. In terms of biological role, part of the ABC transporter complex HmuTUV involved in hemin import. Responsible for energy coupling to the transport system. The sequence is that of Hemin import ATP-binding protein HmuV from Rhodopseudomonas palustris (strain BisB5).